Consider the following 1014-residue polypeptide: C2 domain-containing protein 5 (1014 aa).

The region spanning 1–109 is the C2 domain; it reads MPGKLKVKIV…EAATVISGWF (109 aa). Residues aspartate 19, aspartate 26, aspartate 76, aspartate 78, serine 81, and aspartate 84 each coordinate Ca(2+). Disordered stretches follow at residues 274-328, 639-669, 801-878, and 992-1014; these read LNPN…GRDG, ETVG…AELD, ALQV…HRGG, and EAGP…DSAT. The segment covering 275 to 292 has biased composition (polar residues); it reads NPNTHSSGPSTPLKNQTY. Residues 293–318 are compositionally biased toward low complexity; it reads SFSPSKSFSRQSSSSDTDLSLTPKTG. Positions 319–328 are enriched in gly residues; sequence MGSGSAGRDG. Over residues 830 to 840 the composition is skewed to polar residues; it reads SSDSPGPSTFS. A compositionally biased stretch (low complexity) spans 993-1006; sequence AGPGQPTAPGPQSA.

The cofactor is Ca(2+).

Its subcellular location is the cytoplasmic vesicle membrane. The protein resides in the cytoplasm. It localises to the cell cortex. The protein localises to the cell membrane. It is found in the cell projection. Its subcellular location is the ruffle. Functionally, may be required for insulin-stimulated glucose transport and glucose transporter SLC2A4/GLUT4 translocation from intracellular glucose storage vesicle (GSV) to the plasma membrane (PM) in adipocytes. May bind phospholipid membranes in a calcium-dependent manner. This Xenopus tropicalis (Western clawed frog) protein is C2 domain-containing protein 5 (c2cd5).